The primary structure comprises 513 residues: ATP synthase subunit alpha (513 aa).

An ATP-binding site is contributed by 169–176 (GDRQTGKT).

This sequence belongs to the ATPase alpha/beta chains family. In terms of assembly, F-type ATPases have 2 components, CF(1) - the catalytic core - and CF(0) - the membrane proton channel. CF(1) has five subunits: alpha(3), beta(3), gamma(1), delta(1), epsilon(1). CF(0) has three main subunits: a(1), b(2) and c(9-12). The alpha and beta chains form an alternating ring which encloses part of the gamma chain. CF(1) is attached to CF(0) by a central stalk formed by the gamma and epsilon chains, while a peripheral stalk is formed by the delta and b chains.

The protein resides in the cell inner membrane. The enzyme catalyses ATP + H2O + 4 H(+)(in) = ADP + phosphate + 5 H(+)(out). Its function is as follows. Produces ATP from ADP in the presence of a proton gradient across the membrane. The alpha chain is a regulatory subunit. This Halorhodospira halophila (strain DSM 244 / SL1) (Ectothiorhodospira halophila (strain DSM 244 / SL1)) protein is ATP synthase subunit alpha.